The primary structure comprises 118 residues: Cell division protein SepF (118 aa).

Positions 1–12 (MGIMSKILGGGG) are important for localization in a ring-like structure at midcell.

As to quaternary structure, homodimer. Does not oligomerize. Interacts with FtsZ2.

Its subcellular location is the cytoplasm. Functionally, involved in cell division. Probably acts as a membrane anchor for FstZ2, tethering its filaments to the division site. May be involved in septum closure. The chain is Cell division protein SepF from Haloferax volcanii (strain ATCC 29605 / DSM 3757 / JCM 8879 / NBRC 14742 / NCIMB 2012 / VKM B-1768 / DS2) (Halobacterium volcanii).